The primary structure comprises 63 residues: Cysteine-rich peptide clone 2 (63 aa).

Positions 1 to 23 (MHFSGVVLILLSMTLVNFVFVET) are cleaved as a signal peptide. 3 cysteine pairs are disulfide-bonded: C33–C53, C38–C58, and C42–C60.

As to expression, expressed by the venom gland.

It is found in the secreted. This Tityus costatus (Brazilian scorpion) protein is Cysteine-rich peptide clone 2.